The following is a 440-amino-acid chain: uncharacterized protein (440 aa).

12 helical membrane-spanning segments follow: residues 24 to 44, 47 to 67, 93 to 113, 117 to 137, 155 to 175, 183 to 203, 229 to 249, 276 to 296, 323 to 343, 346 to 366, 379 to 399, and 400 to 420; these read VVIG…APAA, AGSG…CNAI, FWGY…CAAM, VGFY…VVAL, IVAV…GSGA, IGVD…FFAF, LALG…IAVL, VVQI…ILGV, PFRA…TADI, AIGF…ASAL, IPLV…LSSV, and AAGA…RIIT.

It belongs to the amino acid-polyamine-organocation (APC) superfamily.

The protein localises to the cell membrane. Probable amino-acid or metabolite transport protein. This is an uncharacterized protein from Mycobacterium bovis (strain ATCC BAA-935 / AF2122/97).